Here is a 787-residue protein sequence, read N- to C-terminus: Ribonucleoside-diphosphate reductase large subunit (787 aa).

Substrate-binding positions include T209, 224 to 225, G255, 436 to 440, and 618 to 622; these read SC, NLCTE, and PTVSS. C225 and C453 are oxidised to a cystine. N436 acts as the Proton acceptor in catalysis. C438 (cysteine radical intermediate) is an active-site residue. E440 serves as the catalytic Proton acceptor.

It belongs to the ribonucleoside diphosphate reductase large chain family. In terms of assembly, heterotetramer composed of a homodimer of the large subunit (R1) and a homodimer of the small subunit (R2). Larger multisubunit protein complex are also active, composed of (R1)n(R2)n.

It carries out the reaction a 2'-deoxyribonucleoside 5'-diphosphate + [thioredoxin]-disulfide + H2O = a ribonucleoside 5'-diphosphate + [thioredoxin]-dithiol. Its function is as follows. Ribonucleoside-diphosphate reductase holoenzyme provides the precursors necessary for viral DNA synthesis. Allows virus growth in non-dividing cells, as well as reactivation from latency in infected hosts. Catalyzes the biosynthesis of deoxyribonucleotides from the corresponding ribonucleotides. This is Ribonucleoside-diphosphate reductase large subunit from Bos taurus (Bovine).